A 504-amino-acid chain; its full sequence is Cystathionine beta-synthase (504 aa).

Heme is bound by residues Cys12 and His23. Lys78 carries the N6-(pyridoxal phosphate)lysine modification. Pyridoxal 5'-phosphate is bound by residues Asn108, 215-219, and Ser307; that span reads GTGGT. CBS domains follow at residues 375 to 434 and 442 to 498; these read LSFD…IVKC and MVKQ…NGTS.

The protein belongs to the cysteine synthase/cystathionine beta-synthase family. Homodimer. The cofactor is pyridoxal 5'-phosphate.

The enzyme catalyses L-homocysteine + L-serine = L,L-cystathionine + H2O. The protein operates within amino-acid biosynthesis; L-cysteine biosynthesis; L-cysteine from L-homocysteine and L-serine: step 1/2. Its activity is regulated as follows. Has no response to S-adenosyl-methionine/AdoMet, unlike mammalian orthologs. Binds non-covalently to a heme group that may control the redox sensitivity of the enzyme. Functionally, hydro-lyase catalyzing the first step of the transsulfuration pathway, where the hydroxyl group of L-serine is displaced by L-homocysteine in a beta-replacement reaction to form L-cystathionine, the precursor of L-cysteine. This is Cystathionine beta-synthase from Apis mellifera (Honeybee).